The chain runs to 866 residues: Speckle targeted PIP5K1A-regulated poly(A) polymerase (866 aa).

Residues 16–46 (FRCCLCDVTTANRPSLDAHLKGRKHRDLVQL) form a Matrin-type zinc finger. Residues 56–128 (RSVFVSGFPR…HTLRVRPREQ (73 aa)) form the RRM domain. A disordered region spans residues 116–147 (LGGHTLRVRPREQKEFQSPASKSPKGVDSNSH). S205 provides a ligand contact to ATP. The Mg(2+) site is built by D216 and D218. UTP contacts are provided by D216 and D218. 2 disordered regions span residues 223–249 (LGDM…STLA) and 267–321 (LSPT…EGKH). Residues 282–304 (TPSSLAPQTPDSALGSDTVTSPQ) show a composition bias toward polar residues. Position 393 (N393) interacts with ATP. Positions 393, 415, 433, and 550 each coordinate UTP. The PAP-associated domain occupies 492–550 (LSSLLAQFFSCVSCWDLSGSLLSLREGQALMVAGGLPSDLWEGLRLGPMNLQDPFDLSH). A KA1; binds the bulging loops of U6 snRNA but is dispensable for terminal uridylyltransferase activity region spans residues 599–866 (SSPSSLLSAK…IPQALKNLLK (268 aa)). Disordered regions lie at residues 638–687 (QGTK…DHSE), 728–755 (EQNP…PSSV), and 773–792 (RRRF…STGA). A compositionally biased stretch (basic and acidic residues) spans 669–687 (KSCEEGKEEPQGCAGDHSE). A phosphoserine mark is found at S686 and S741.

This sequence belongs to the DNA polymerase type-B-like family. Associates with the cleavage and polyadenylation specificity factor (CPSF) complex. Interacts with CPSF1 and CPSF3; the interaction is direct. Interacts with PIP5K1A. The cofactor is Mg(2+). Mn(2+) is required as a cofactor. Phosphorylated by CK1 in the proline-rich (Pro-rich) region.

Its subcellular location is the nucleus. It localises to the nucleolus. The protein resides in the nucleus speckle. The enzyme catalyses RNA(n) + UTP = RNA(n)-3'-uridine ribonucleotide + diphosphate. It catalyses the reaction RNA(n) + ATP = RNA(n)-3'-adenine ribonucleotide + diphosphate. With respect to regulation, adenylyltransferase activity is specifically phosphatidylinositol 4,5-bisphosphate (PtdIns(4,5)P2). Functionally, poly(A) polymerase that creates the 3'-poly(A) tail of specific pre-mRNAs. Localizes to nuclear speckles together with PIP5K1A and mediates polyadenylation of a select set of mRNAs, such as HMOX1. In addition to polyadenylation, it is also required for the 3'-end cleavage of pre-mRNAs: binds to the 3'UTR of targeted pre-mRNAs and promotes the recruitment and assembly of the CPSF complex on the 3'UTR of pre-mRNAs. In addition to adenylyltransferase activity, also has uridylyltransferase activity. However, the ATP ratio is higher than UTP in cells, suggesting that it functions primarily as a poly(A) polymerase. Acts as a specific terminal uridylyltransferase for U6 snRNA in vitro: responsible for a controlled elongation reaction that results in the restoration of the four 3'-terminal UMP-residues found in newly transcribed U6 snRNA. Not involved in replication-dependent histone mRNA degradation. This chain is Speckle targeted PIP5K1A-regulated poly(A) polymerase (Tut1), found in Rattus norvegicus (Rat).